The primary structure comprises 389 residues: Carbamoyl phosphate synthase small chain (389 aa).

Residues 1-199 form a CPSase region; that stretch reads MFNPAILVLA…AGKPFNLQTT (199 aa). L-glutamine-binding residues include serine 50, glycine 251, and glycine 253. The Glutamine amidotransferase type-1 domain maps to 203–389; that stretch reads HVVAYDFGIK…FINAVQATKA (187 aa). Cysteine 279 (nucleophile) is an active-site residue. Positions 280, 283, 321, 323, and 324 each coordinate L-glutamine. Residues histidine 363 and glutamate 365 contribute to the active site.

The protein belongs to the CarA family. As to quaternary structure, composed of two chains; the small (or glutamine) chain promotes the hydrolysis of glutamine to ammonia, which is used by the large (or ammonia) chain to synthesize carbamoyl phosphate. Tetramer of heterodimers (alpha,beta)4.

It catalyses the reaction hydrogencarbonate + L-glutamine + 2 ATP + H2O = carbamoyl phosphate + L-glutamate + 2 ADP + phosphate + 2 H(+). The enzyme catalyses L-glutamine + H2O = L-glutamate + NH4(+). The protein operates within amino-acid biosynthesis; L-arginine biosynthesis; carbamoyl phosphate from bicarbonate: step 1/1. It participates in pyrimidine metabolism; UMP biosynthesis via de novo pathway; (S)-dihydroorotate from bicarbonate: step 1/3. In terms of biological role, small subunit of the glutamine-dependent carbamoyl phosphate synthetase (CPSase). CPSase catalyzes the formation of carbamoyl phosphate from the ammonia moiety of glutamine, carbonate, and phosphate donated by ATP, constituting the first step of 2 biosynthetic pathways, one leading to arginine and/or urea and the other to pyrimidine nucleotides. The small subunit (glutamine amidotransferase) binds and cleaves glutamine to supply the large subunit with the substrate ammonia. The chain is Carbamoyl phosphate synthase small chain from Haemophilus ducreyi (strain 35000HP / ATCC 700724).